Reading from the N-terminus, the 264-residue chain is Type III pantothenate kinase (264 aa).

Position 6–13 (6–13 (DIGNTQTV)) interacts with ATP. Residues Tyr-100 and 107 to 110 (GADR) contribute to the substrate site. Catalysis depends on Asp-109, which acts as the Proton acceptor. A K(+)-binding site is contributed by Asp-129. Thr-132 provides a ligand contact to ATP. Thr-185 contributes to the substrate binding site.

It belongs to the type III pantothenate kinase family. In terms of assembly, homodimer. The cofactor is NH4(+). It depends on K(+) as a cofactor.

It is found in the cytoplasm. It catalyses the reaction (R)-pantothenate + ATP = (R)-4'-phosphopantothenate + ADP + H(+). It participates in cofactor biosynthesis; coenzyme A biosynthesis; CoA from (R)-pantothenate: step 1/5. Catalyzes the phosphorylation of pantothenate (Pan), the first step in CoA biosynthesis. The chain is Type III pantothenate kinase from Rubrobacter xylanophilus (strain DSM 9941 / JCM 11954 / NBRC 16129 / PRD-1).